The primary structure comprises 1337 residues: Nucleoporin POM152 (1337 aa).

The tract at residues 1–48 is disordered; that stretch reads MEHRYNVFNDTPRGNHWMGSSVSGSPRPSYSSRPNVNTTRRFQYSDDE. The Cytoplasmic segment spans residues 1–110; sequence MEHRYNVFND…TDVLEISKQR (110 aa). Positions 1 to 175 are pore side; the sequence is MEHRYNVFND…SFNIPRLTFK (175 aa). The span at 19 to 37 shows a compositional bias: low complexity; the sequence is GSSVSGSPRPSYSSRPNVN. Phosphoserine occurs at positions 45 and 60. A helical membrane pass occupies residues 111-131; that stretch reads TFAVILFLIIQCYKIYDLVIL. Residues 132–148 lie on the Perinuclear space side of the membrane; it reads KSGLPLSGLLFKNYRFN. Residues 149-169 traverse the membrane as a helical segment; sequence FISKYFIIDSFFLYVLPSFNI. Residues 170–172 are Cytoplasmic-facing; the sequence is PRL. A helical transmembrane segment spans residues 173–193; that stretch reads TFKPWVVYLQILAMLLLNIFI. Residues 194–1337 lie on the Perinuclear space side of the membrane; it reads SSDHEFVLIS…FAKNDLFFNN (1144 aa). A cisternal side region spans residues 196–1337; that stretch reads DHEFVLISLI…FAKNDLFFNN (1142 aa). Residue Asn280 is glycosylated (N-linked (GlcNAc...) asparagine). 8 repeat units span residues 390–413, 626–650, 732–755, 836–859, 943–966, 1058–1077, 1157–1178, and 1253–1276. The segment at 390–1276 is 8 X 24 AA approximate repeats; the sequence is DRCIGDSDNV…EGTPPFSLTY (887 aa).

In terms of assembly, component of the nuclear pore complex (NPC). NPC constitutes the exclusive means of nucleocytoplasmic transport. NPCs allow the passive diffusion of ions and small molecules and the active, nuclear transport receptor-mediated bidirectional transport of macromolecules such as proteins, RNAs, ribonucleoparticles (RNPs), and ribosomal subunits across the nuclear envelope. Due to its 8-fold rotational symmetry, all subunits are present with 8 copies or multiples thereof. Interacts with NUP188. Post-translationally, the N-terminus is blocked. Phosphorylated by CDC28.

The protein localises to the nucleus. The protein resides in the nuclear pore complex. It localises to the nucleus membrane. Functionally, functions as a component of the nuclear pore complex (NPC). NPC components, collectively referred to as nucleoporins (NUPs), can play the role of both NPC structural components and of docking or interaction partners for transiently associated nuclear transport factors. POM152 is important for the de novo assembly of NPCs. The polypeptide is Nucleoporin POM152 (POM152) (Saccharomyces cerevisiae (strain ATCC 204508 / S288c) (Baker's yeast)).